Consider the following 244-residue polypeptide: tRNA (guanine-N(1)-)-methyltransferase (244 aa).

Residues G114 and 134-139 (IGDYVL) contribute to the S-adenosyl-L-methionine site. The disordered stretch occupies residues 220-244 (RRPDLLEKAGASPGKSGSNFGKHDA).

The protein belongs to the RNA methyltransferase TrmD family. Homodimer.

It is found in the cytoplasm. The catalysed reaction is guanosine(37) in tRNA + S-adenosyl-L-methionine = N(1)-methylguanosine(37) in tRNA + S-adenosyl-L-homocysteine + H(+). In terms of biological role, specifically methylates guanosine-37 in various tRNAs. The chain is tRNA (guanine-N(1)-)-methyltransferase from Rhizobium johnstonii (strain DSM 114642 / LMG 32736 / 3841) (Rhizobium leguminosarum bv. viciae).